The chain runs to 424 residues: Histidine--tRNA ligase (424 aa).

Belongs to the class-II aminoacyl-tRNA synthetase family. Homodimer.

It is found in the cytoplasm. The enzyme catalyses tRNA(His) + L-histidine + ATP = L-histidyl-tRNA(His) + AMP + diphosphate + H(+). This Escherichia coli O17:K52:H18 (strain UMN026 / ExPEC) protein is Histidine--tRNA ligase.